A 490-amino-acid chain; its full sequence is MKSTVEKLSPTRVRINVEVPFAELEPDFSKAYKELAQQVRLPGFRPGKAPAKLLEARVGRAAVLEQVVNAALPARYSEAVTASDVKPLGQPEIEVTKIEDGQELTFTAEVDVRPEIELPDLSGVAVTVKPVTVEDSEVEAELDALRARFGTLKGVERAAENGDFVSIDLSATVDGKEVEEAATTGLSHEIGSGQLIDGLDEAIIGLKAGEEKVFTTKLAAGEFAGQEAEVTVKVGSIKERELPDADDDFAQLASEFDTIGELKDSLTEQVKGRKRIAQADEIRDETITALLDKIEIPVPEKILEEQIGNNLHEAVHGLDHNEERLNELLQEQGSSREEFDKDMRESATKSIKTELLLDVIADKFDINVDQQDLTERLVLMSRQYGIEPQQLVQYLTQQQQLPGLYVDVRRGKAIAEVIRQAKVTDSTGADVDVDAVLGPRRGGADEAGAEAEAAEEKPAKAKKSADSEKTDKSEKAEKKSKKKSKDDDAE.

Residues 162–243 (GDFVSIDLSA…VGSIKERELP (82 aa)) enclose the PPIase FKBP-type domain. The disordered stretch occupies residues 433–490 (VDAVLGPRRGGADEAGAEAEAAEEKPAKAKKSADSEKTDKSEKAEKKSKKKSKDDDAE). Basic and acidic residues predominate over residues 454-477 (AEEKPAKAKKSADSEKTDKSEKAE).

The protein belongs to the FKBP-type PPIase family. Tig subfamily.

Its subcellular location is the cytoplasm. The catalysed reaction is [protein]-peptidylproline (omega=180) = [protein]-peptidylproline (omega=0). Its function is as follows. Involved in protein export. Acts as a chaperone by maintaining the newly synthesized protein in an open conformation. Functions as a peptidyl-prolyl cis-trans isomerase. The chain is Trigger factor from Mycobacteroides abscessus (strain ATCC 19977 / DSM 44196 / CCUG 20993 / CIP 104536 / JCM 13569 / NCTC 13031 / TMC 1543 / L948) (Mycobacterium abscessus).